The following is a 905-amino-acid chain: Phosphatidylethanolamine N-methyltransferase (905 aa).

2 stretches are compositionally biased toward polar residues: residues 1 to 22 and 40 to 58; these read MTNQIPSASSAADFGSSKSTSV and DSNGLQQTNQIEQAESSLN. The segment at 1–73 is disordered; it reads MTNQIPSASS…SEPERYGCTP (73 aa). The Lumenal segment spans residues 1 to 104; that stretch reads MTNQIPSASS…DPRFSKTPWD (104 aa). A helical membrane pass occupies residues 105–125; that stretch reads WIVISSILAQVLLFFMTTGAV. Topologically, residues 126–128 are cytoplasmic; it reads RRY. A helical transmembrane segment spans residues 129–149; it reads SMMLCFFFWRISYDAGIGFLL. Residues 150–209 are Lumenal-facing; it reads HMQSNHRKVVTWISDFGFFDKENHPKLYDLTKKQLISKMDSSYNYDTSPLEFNSWLVFRH. The chain crosses the membrane as a helical span at residues 210 to 230; sequence FVDLILMCDFCSYILMGLAWT. Over 231–236 the chain is Cytoplasmic; sequence CWPKVN. The helical transmembrane segment at 237–257 threads the bilayer; the sequence is IILQFLRIFGGIALIVFNYWV. Topologically, residues 258–268 are lumenal; it reads KMDAHRVVRDY. The helical transmembrane segment at 269–289 threads the bilayer; that stretch reads AWYWGDFFFLLRSSLVFNGVF. Residues 290–313 are Cytoplasmic-facing; that stretch reads ELAPHPMYSVGYAGYYGMSLLTGS. The helical transmembrane segment at 314 to 334 threads the bilayer; that stretch reads YAVLFASILAHAAQFGFLLFV. The Lumenal segment spans residues 335–379; sequence ENPHIERTYGTDINHARLSPRGEDNEFELPPEHDLVGFVNFDFTR. The residue at position 353 (Ser353) is a Phosphoserine. The chain crosses the membrane as a helical span at residues 380–400; sequence ISDVALLIIALYSIFIILLSS. Residues 401–408 lie on the Cytoplasmic side of the membrane; the sequence is NSHYSQFW. Residues 409–429 traverse the membrane as a helical segment; the sequence is AIFQAFVWRFLHSIIHAFILF. Topologically, residues 430-456 are lumenal; it reads YQSKSKAWTKHFIRNGESAAYAWSQWK. Residues 457-479 form a helical membrane-spanning segment; that stretch reads GLYNLTLNMSYISFVMAAWKLYH. At 480–493 the chain is on the cytoplasmic side; it reads LPSNWTYGLVSLRH. Residues 494-514 form a helical membrane-spanning segment; sequence ALGFGLIALHIYTSVSIYEDL. Residues 515-552 are Lumenal-facing; that stretch reads GQYGWFYGDFFLPSRSPKLVYQGIYRYVNNPERFLGCS. Residues 553-573 form a helical membrane-spanning segment; that stretch reads AYWGLALISSSAWIFLIAILA. Residues 574-905 are Cytoplasmic-facing; sequence QLSNLAIIRL…FDGPSGAKDD (332 aa).

Belongs to the class VI-like SAM-binding methyltransferase superfamily. CHO2 family.

Its subcellular location is the endoplasmic reticulum membrane. It catalyses the reaction a 1,2-diacyl-sn-glycero-3-phosphoethanolamine + S-adenosyl-L-methionine = a 1,2-diacyl-sn-glycero-3-phospho-N-methylethanolamine + S-adenosyl-L-homocysteine + H(+). Its pathway is phospholipid metabolism; phosphatidylcholine biosynthesis. Functionally, catalyzes the first step of the methylation pathway of phosphatidylcholine biosynthesis, the SAM-dependent methylation of phosphatidylethanolamine (PE) to phosphatidylmonomethylethanolamine (PMME). The sequence is that of Phosphatidylethanolamine N-methyltransferase from Schizosaccharomyces pombe (strain 972 / ATCC 24843) (Fission yeast).